Here is a 554-residue protein sequence, read N- to C-terminus: Probable oligo-1,6-glucosidase 3 (554 aa).

The Nucleophile role is filled by aspartate 199. Glutamate 256 functions as the Proton donor in the catalytic mechanism.

This sequence belongs to the glycosyl hydrolase 13 family.

The protein localises to the cytoplasm. It carries out the reaction Hydrolysis of (1-&gt;6)-alpha-D-glucosidic linkages in some oligosaccharides produced from starch and glycogen by alpha-amylase, and in isomaltose.. The polypeptide is Probable oligo-1,6-glucosidase 3 (yugT) (Bacillus subtilis (strain 168)).